The following is a 119-amino-acid chain: Holo-[acyl-carrier-protein] synthase (119 aa).

Mg(2+)-binding residues include Asp-8 and Glu-58.

Belongs to the P-Pant transferase superfamily. AcpS family. Mg(2+) is required as a cofactor.

Its subcellular location is the cytoplasm. It catalyses the reaction apo-[ACP] + CoA = holo-[ACP] + adenosine 3',5'-bisphosphate + H(+). Functionally, transfers the 4'-phosphopantetheine moiety from coenzyme A to a Ser of acyl-carrier-protein. The sequence is that of Holo-[acyl-carrier-protein] synthase from Oceanobacillus iheyensis (strain DSM 14371 / CIP 107618 / JCM 11309 / KCTC 3954 / HTE831).